A 428-amino-acid polypeptide reads, in one-letter code: Dihydrolipoyllysine-residue acetyltransferase component of pyruvate dehydrogenase complex (428 aa).

Residues 2 to 77 (AFEFKLPDIG…TVGQTLITLD (76 aa)) form the Lipoyl-binding domain. K43 carries the post-translational modification N6-lipoyllysine. The tract at residues 88–123 (GQEQEEAKKEEKTETVSKEEKVDAVAPNAPAAEAEA) is disordered. Basic and acidic residues predominate over residues 89–110 (QEQEEAKKEEKTETVSKEEKVD). The span at 111–123 (AVAPNAPAAEAEA) shows a compositional bias: low complexity. One can recognise a Peripheral subunit-binding (PSBD) domain in the interval 130-167 (IAMPSVRKYAREKGVDIRLVQGTGKNGRVLKEDIDAFL). Over residues 177-194 (AAEEKAAPAAAKPATTEG) the composition is skewed to low complexity. The disordered stretch occupies residues 177–201 (AAEEKAAPAAAKPATTEGEFPETRE). The active site involves H399.

It belongs to the 2-oxoacid dehydrogenase family. In terms of assembly, forms a 60-polypeptide structural core with icosahedral symmetry. The cofactor is (R)-lipoate.

It carries out the reaction N(6)-[(R)-dihydrolipoyl]-L-lysyl-[protein] + acetyl-CoA = N(6)-[(R)-S(8)-acetyldihydrolipoyl]-L-lysyl-[protein] + CoA. In terms of biological role, the pyruvate dehydrogenase complex catalyzes the overall conversion of pyruvate to acetyl-CoA and CO(2). It contains multiple copies of three enzymatic components: pyruvate dehydrogenase (E1), dihydrolipoamide acetyltransferase (E2) and lipoamide dehydrogenase (E3). The sequence is that of Dihydrolipoyllysine-residue acetyltransferase component of pyruvate dehydrogenase complex (pdhC) from Geobacillus stearothermophilus (Bacillus stearothermophilus).